Here is a 306-residue protein sequence, read N- to C-terminus: Ectoine dioxygenase (306 aa).

Glutamine 127 contributes to the L-ectoine binding site. Lysine 133 lines the 2-oxoglutarate pocket. Residues histidine 144, aspartate 146, and histidine 245 each contribute to the Fe cation site.

This sequence belongs to the PhyH family. EctD subfamily. As to quaternary structure, homodimer. It depends on Fe(2+) as a cofactor.

The catalysed reaction is L-ectoine + 2-oxoglutarate + O2 = 5-hydroxyectoine + succinate + CO2. Involved in the biosynthesis of 5-hydroxyectoine, called compatible solute, which helps organisms to survive extreme osmotic stress by acting as a highly soluble organic osmolyte. Catalyzes the 2-oxoglutarate-dependent selective hydroxylation of L-ectoine to yield (4S,5S)-5-hydroxyectoine. The polypeptide is Ectoine dioxygenase (Sphingopyxis alaskensis (strain DSM 13593 / LMG 18877 / RB2256) (Sphingomonas alaskensis)).